We begin with the raw amino-acid sequence, 560 residues long: Phenylalanine--tRNA ligase beta subunit (560 aa).

The region spanning 279–354 is the B5 domain; it reads LTPKEFEVDL…IAYGYNNIEP (76 aa). Residues Asp-332, Asp-338, Glu-341, and Asp-342 each coordinate Mg(2+).

Belongs to the phenylalanyl-tRNA synthetase beta subunit family. Type 2 subfamily. Tetramer of two alpha and two beta subunits. Mg(2+) is required as a cofactor.

It localises to the cytoplasm. It catalyses the reaction tRNA(Phe) + L-phenylalanine + ATP = L-phenylalanyl-tRNA(Phe) + AMP + diphosphate + H(+). This chain is Phenylalanine--tRNA ligase beta subunit, found in Thermococcus sibiricus (strain DSM 12597 / MM 739).